The chain runs to 385 residues: Multidrug export protein AcrE (385 aa).

The signal sequence occupies residues 1–23; it reads MTKHARFFLLPSFILISAALIAG. Residue Cys24 is the site of N-palmitoyl cysteine attachment. Cys24 carries S-diacylglycerol cysteine lipidation. Positions 366 to 385 are disordered; it reads ARPGEQVKATTDTPADTASK. Positions 373 to 385 are enriched in polar residues; sequence KATTDTPADTASK.

This sequence belongs to the membrane fusion protein (MFP) (TC 8.A.1) family. As to quaternary structure, part of the tripartite efflux system AcrEF-TolC, which is composed of an inner membrane transporter, AcrF, a periplasmic membrane fusion protein, AcrE, and an outer membrane component, TolC. The complex forms a large protein conduit and can translocate molecules across both the inner and outer membranes.

It localises to the cell inner membrane. Its function is as follows. Part of the tripartite efflux system AcrEF-TolC. Involved in the efflux of indole and organic solvents. The polypeptide is Multidrug export protein AcrE (acrE) (Escherichia coli (strain K12)).